We begin with the raw amino-acid sequence, 235 residues long: Probable inactive serine protease 37 (235 aa).

A signal peptide spans 1-19 (MKYVFYLGVLAGTFFFADS). The Peptidase S1 domain occupies 20–233 (SVQKEDPAPY…YVSWIENTAK (214 aa)). Intrachain disulfides connect cysteine 40–cysteine 56, cysteine 131–cysteine 198, and cysteine 163–cysteine 177.

It belongs to the peptidase S1 family. As to expression, testis-specific. Expressed in spermatids (at protein level).

It is found in the cytoplasmic vesicle. The protein localises to the secretory vesicle. Its subcellular location is the acrosome. The protein resides in the secreted. Functionally, plays a role in male fertility. May have a role in sperm migration or binding to zona-intact eggs. Involved in the activation of the proacrosin/acrosin system. The polypeptide is Probable inactive serine protease 37 (Homo sapiens (Human)).